Reading from the N-terminus, the 289-residue chain is ATP synthase gamma chain (289 aa).

It belongs to the ATPase gamma chain family. In terms of assembly, F-type ATPases have 2 components, CF(1) - the catalytic core - and CF(0) - the membrane proton channel. CF(1) has five subunits: alpha(3), beta(3), gamma(1), delta(1), epsilon(1). CF(0) has three main subunits: a, b and c.

The protein resides in the cell membrane. Its function is as follows. Produces ATP from ADP in the presence of a proton gradient across the membrane. The gamma chain is believed to be important in regulating ATPase activity and the flow of protons through the CF(0) complex. This chain is ATP synthase gamma chain, found in Lactococcus lactis subsp. lactis (strain IL1403) (Streptococcus lactis).